The primary structure comprises 176 residues: Inner membrane-spanning protein YciB (176 aa).

The next 5 helical transmembrane spans lie at 23–43 (MIAA…FLYW), 50–70 (TMQW…IVLG), 74–94 (FIMW…LGSH), 119–139 (LTYM…FVFT), and 150–170 (MFGS…YLST).

This sequence belongs to the YciB family.

The protein resides in the cell inner membrane. Functionally, plays a role in cell envelope biogenesis, maintenance of cell envelope integrity and membrane homeostasis. This is Inner membrane-spanning protein YciB from Neisseria gonorrhoeae (strain ATCC 700825 / FA 1090).